Consider the following 455-residue polypeptide: UDP-N-acetylmuramoylalanine--D-glutamate ligase (455 aa).

117–123 (GSAGKTT) is an ATP binding site.

The protein belongs to the MurCDEF family.

Its subcellular location is the cytoplasm. It catalyses the reaction UDP-N-acetyl-alpha-D-muramoyl-L-alanine + D-glutamate + ATP = UDP-N-acetyl-alpha-D-muramoyl-L-alanyl-D-glutamate + ADP + phosphate + H(+). Its pathway is cell wall biogenesis; peptidoglycan biosynthesis. Functionally, cell wall formation. Catalyzes the addition of glutamate to the nucleotide precursor UDP-N-acetylmuramoyl-L-alanine (UMA). In Symbiobacterium thermophilum (strain DSM 24528 / JCM 14929 / IAM 14863 / T), this protein is UDP-N-acetylmuramoylalanine--D-glutamate ligase.